We begin with the raw amino-acid sequence, 903 residues long: Cell division cycle protein 48 homolog MJ1156 (903 aa).

Residues 220–227 (GPPGTGKT) and 493–500 (GPPGTGKT) contribute to the ATP site.

It belongs to the AAA ATPase family. CDC48 subfamily.

The sequence is that of Cell division cycle protein 48 homolog MJ1156 from Methanocaldococcus jannaschii (strain ATCC 43067 / DSM 2661 / JAL-1 / JCM 10045 / NBRC 100440) (Methanococcus jannaschii).